Consider the following 23-residue polypeptide: Aurein-4.1 (23 aa).

It belongs to the frog skin active peptide (FSAP) family. Aurein subfamily. As to expression, expressed by the skin dorsal glands.

The protein resides in the secreted. Has no antimicrobial or anticancer activity. The chain is Aurein-4.1 from Ranoidea aurea (Green and golden bell frog).